Here is a 351-residue protein sequence, read N- to C-terminus: GDSL esterase/lipase At4g26790 (351 aa).

Residues 1-25 (MQRNRVLAFLLLAAQLLVKIPETCA) form the signal peptide. The Nucleophile role is filled by Ser-36. N-linked (GlcNAc...) asparagine glycosylation is present at Asn-118. Residues Asp-326 and His-329 contribute to the active site.

It belongs to the 'GDSL' lipolytic enzyme family.

The protein resides in the secreted. In Arabidopsis thaliana (Mouse-ear cress), this protein is GDSL esterase/lipase At4g26790.